The chain runs to 460 residues: Ammonium transporter Rh type B (460 aa).

The Cytoplasmic portion of the chain corresponds to Met1–Ile10. Residues Lys11–Val31 form a helical membrane-spanning segment. At Arg32–Tyr62 the chain is on the extracellular side. Residue Asn48 is glycosylated (N-linked (GlcNAc...) asparagine). A helical membrane pass occupies residues Pro63 to Leu83. The Cytoplasmic portion of the chain corresponds to Lys84–Gly87. A helical transmembrane segment spans residues Phe88–Ile108. At Gln109–Glu125 the chain is on the extracellular side. A helical transmembrane segment spans residues Ser126–Gly146. Over Lys147–Pro150 the chain is Cytoplasmic. Residues Val151–Ile171 traverse the membrane as a helical segment. The Extracellular segment spans residues Leu172 to Asp179. Residues Ala180–Tyr202 form a helical membrane-spanning segment. Topologically, residues Arg203–Asp220 are cytoplasmic. Residues Leu221–Ile241 form a helical membrane-spanning segment. Topologically, residues Thr242–Val252 are extracellular. A helical transmembrane segment spans residues Met253–Leu273. Topologically, residues Asn274 to His283 are cytoplasmic. A helical membrane pass occupies residues Ile284 to Thr304. Position 305 (Pro305) is a topological domain, extracellular. Residues Phe306–Leu326 traverse the membrane as a helical segment. At Thr327 to Gly347 the chain is on the cytoplasmic side. A helical membrane pass occupies residues Met348–Ile368. Topologically, residues Tyr369 to Gln394 are extracellular. The chain crosses the membrane as a helical span at residues Phe395–Ile415. Topologically, residues Leu416 to Ala460 are cytoplasmic.

This sequence belongs to the ammonium transporter (TC 2.A.49) family. Rh subfamily.

The protein localises to the basolateral cell membrane. Its subcellular location is the cytoplasmic vesicle membrane. Functions as a specific ammonium transporter. This is Ammonium transporter Rh type B (rhbg) from Xenopus tropicalis (Western clawed frog).